The sequence spans 258 residues: Granzyme M (258 aa).

Residues 21–250 (IIGGREAVPH…YSSWIRKVIG (230 aa)) form the Peptidase S1 domain. Cys-46 and Cys-62 are joined by a disulfide. Catalysis depends on charge relay system residues His-61 and Asp-107. Residues 122–141 (NVKPLALPRKPRDKPAEGSR) are disordered. 3 disulfide bridges follow: Cys-142-Cys-210, Cys-173-Cys-189, and Cys-200-Cys-226. An N-linked (GlcNAc...) asparagine glycan is attached at Asn-174. Catalysis depends on Ser-204, which acts as the Charge relay system. Asn-225 carries N-linked (GlcNAc...) asparagine glycosylation.

Belongs to the peptidase S1 family. Granzyme subfamily.

Its subcellular location is the secreted. The protein localises to the cytoplasmic granule. In terms of biological role, cleaves peptide substrates after methionine, leucine, and norleucine. Physiological substrates include EZR, alpha-tubulins and the apoptosis inhibitor BIRC5/Survivin. Promotes caspase activation and subsequent apoptosis of target cells. The sequence is that of Granzyme M (Gzmm) from Rattus norvegicus (Rat).